The chain runs to 478 residues: Keratin, type II cytoskeletal 8 (478 aa).

The tract at residues 1-97 (MSIRVTQKSY…DPNIQAVRTQ (97 aa)) is head. A Phosphoserine; by PKC/PRKCE modification is found at Ser9. A Glycyl lysine isopeptide (Lys-Gly) (interchain with G-Cter in SUMO2) cross-link involves residue Lys11. A phosphoserine mark is found at Ser13, Ser15, Ser21, and Ser22. Residues 16–44 (APRSFSSRSYTSGPGSRISSSAFSRVGSS) are disordered. The residue at position 23 (Arg23) is an Omega-N-methylarginine. The residue at position 24 (Ser24) is a Phosphoserine; by PKC/PRKCE. Phosphothreonine is present on Thr26. A phosphoserine mark is found at Ser27 and Ser31. Arg32 is modified (omega-N-methylarginine). 2 positions are modified to phosphoserine: Ser34 and Ser39. Position 40 is an omega-N-methylarginine (Arg40). Phosphoserine occurs at positions 43 and 44. Arg48 carries the post-translational modification Asymmetric dimethylarginine; alternate. Arg48 is subject to Omega-N-methylarginine; alternate. At Ser81 the chain carries Phosphoserine; by MAPK. The interval 98–133 (EKEQIKTLNNKFASFIDKVRHLEQQNKVLETKWNLL) is coil 1A. Residues 98–409 (EKEQIKTLNN…KLLEGEESRL (312 aa)) enclose the IF rod domain. Residue Lys108 is modified to N6-malonyllysine. Residues Lys129 and Lys137 each participate in a glycyl lysine isopeptide (Lys-Gly) (interchain with G-Cter in SUMO2) cross-link. Residues 134–150 (QQQKTARSNIDNMFESY) form a linker 1 region. Residues 151-242 (INNLRRQLET…QLYEEEIREM (92 aa)) are coil 1B. A Glycyl lysine isopeptide (Lys-Gly) (interchain with G-Cter in SUMO1); alternate cross-link involves residue Lys204. Lys204 is covalently cross-linked (Glycyl lysine isopeptide (Lys-Gly) (interchain with G-Cter in SUMO2); alternate). Lys214 is modified (N6-acetyllysine). Residue Tyr235 is modified to Phosphotyrosine. A linker 12 region spans residues 243-266 (QSQISDTSVVLEMDNNRNLDLDGI). Residues 267-405 (IAEVKAQYEE…ATYRKLLEGE (139 aa)) form a coil 2 region. Residues 268–389 (AEVKAQYEEI…EYQELMNVKL (122 aa)) form a necessary for interaction with PNN region. Lys271 participates in a covalent cross-link: Glycyl lysine isopeptide (Lys-Gly) (interchain with G-Cter in SUMO2). A Phosphoserine modification is found at Ser281. A Glycyl lysine isopeptide (Lys-Gly) (interchain with G-Cter in SUMO2) cross-link involves residue Lys292. Residue Lys302 forms a Glycyl lysine isopeptide (Lys-Gly) (interchain with G-Cter in SUMO2); alternate linkage. At Lys302 the chain carries N6-acetyllysine; alternate. Residue Lys311 forms a Glycyl lysine isopeptide (Lys-Gly) (interchain with G-Cter in SUMO2) linkage. A Glycyl lysine isopeptide (Lys-Gly) (interchain with G-Cter in SUMO2); alternate cross-link involves residue Lys332. Lys332 carries the post-translational modification N6-acetyllysine; alternate. Ser337 is subject to Phosphoserine. Lys400 participates in a covalent cross-link: Glycyl lysine isopeptide (Lys-Gly) (interchain with G-Cter in SUMO2). A tail region spans residues 406–478 (ESRLESGMQN…VSESSDVLSK (73 aa)). A phosphoserine mark is found at Ser407, Ser411, Ser417, Ser424, and Ser433. Lys467 is covalently cross-linked (Glycyl lysine isopeptide (Lys-Gly) (interchain with G-Cter in SUMO1); alternate). A Glycyl lysine isopeptide (Lys-Gly) (interchain with G-Cter in SUMO2); alternate cross-link involves residue Lys467. Residues Ser470, Ser472, Ser473, and Ser477 each carry the phosphoserine modification.

This sequence belongs to the intermediate filament family. In terms of assembly, heterotetramer of two type I and two type II keratins. Forms a heterodimer with KRT18. Associates with KRT20. Interacts with PNN. When associated with KRT19, interacts with DMD. Interacts with TCHP. Interacts with APEX1. Interacts with GPER1. Interacts with EPPK1. Interacts with PKP1 and PKP2. Post-translationally, O-glycosylated. O-GlcNAcylation at multiple sites increases solubility, and decreases stability by inducing proteasomal degradation. O-glycosylated (O-GlcNAcylated), in a cell cycle-dependent manner. In terms of tissue distribution, expressed in bladder, liver, exocervix and (in very low amounts) esophagus.

The protein resides in the cytoplasm. The protein localises to the nucleus. It localises to the nucleoplasm. It is found in the nucleus matrix. Functionally, together with KRT19, helps to link the contractile apparatus to dystrophin at the costameres of striated muscle. The polypeptide is Keratin, type II cytoskeletal 8 (KRT8) (Bos taurus (Bovine)).